Reading from the N-terminus, the 151-residue chain is Prefoldin subunit alpha (151 aa).

This sequence belongs to the prefoldin subunit alpha family. Heterohexamer of two alpha and four beta subunits.

Its subcellular location is the cytoplasm. Molecular chaperone capable of stabilizing a range of proteins. Seems to fulfill an ATP-independent, HSP70-like function in archaeal de novo protein folding. The sequence is that of Prefoldin subunit alpha (pfdA) from Aeropyrum pernix (strain ATCC 700893 / DSM 11879 / JCM 9820 / NBRC 100138 / K1).